Consider the following 427-residue polypeptide: Endothelin-1 receptor (427 aa).

An N-terminal signal peptide occupies residues 1 to 20; the sequence is METFWLRLSFWVALVGGVIS. The Extracellular portion of the chain corresponds to 21-80; sequence DNPESYSTNLSIHVDSVATFHGTELSFVVTTHQPTNLALPSNGSMHNYCPQQTKITSAFK. 2 N-linked (GlcNAc...) asparagine glycosylation sites follow: asparagine 29 and asparagine 62. A helical transmembrane segment spans residues 81–102; the sequence is YINTVISCTIFIVGMVGNATLL. Residues 103–112 are Cytoplasmic-facing; sequence RIIYQNKCMR. The chain crosses the membrane as a helical span at residues 113–132; the sequence is NGPNALIASLALGDLIYVVI. Over 133–159 the chain is Extracellular; that stretch reads DLPINVFKLLAGRWPFEQNDFGVFLCK. An intrachain disulfide couples cysteine 158 to cysteine 239. Residues 160–181 traverse the membrane as a helical segment; sequence LFPFLQKSSVGITVLNLCALSV. The Cytoplasmic portion of the chain corresponds to 182–205; the sequence is DRYRAVASWSRVQGIGIPLVTAIE. The chain crosses the membrane as a helical span at residues 206–229; that stretch reads IVSIWILSFILAIPEAIGFVMVPF. Over 230–256 the chain is Extracellular; it reads EYKGAQHRTCMLNATSKFMEFYQDVKD. A helical membrane pass occupies residues 257–278; sequence WWLFGFYFCMPLVCTAIFYTLM. The Cytoplasmic portion of the chain corresponds to 279–306; sequence TCEMLNRRNGSLRIALSEHLKQRREVAK. The helical transmembrane segment at 307-328 threads the bilayer; the sequence is TVFCLVVIFALCWFPLHLSRIL. At 329–347 the chain is on the extracellular side; sequence KKTVYDEMDTNRCELLSFL. A helical transmembrane segment spans residues 348-372; sequence LLMDYIGINLATMNSCINPIALYFV. At 373-427 the chain is on the cytoplasmic side; sequence SKKFKNCFQSCLCCCCYQSKSLMTSVPMNGTSIQWKNHEQNNHNTERSSHKDSIN. The residue at position 425 (serine 425) is a Phosphoserine.

Belongs to the G-protein coupled receptor 1 family. Endothelin receptor subfamily. EDNRA sub-subfamily. As to quaternary structure, interacts with HDAC7 and KAT5.

It is found in the cell membrane. Its function is as follows. Receptor for endothelin-1. Mediates its action by association with G proteins that activate a phosphatidylinositol-calcium second messenger system. The rank order of binding affinities for ET-A is: ET1 &gt; ET2 &gt;&gt; ET3. This chain is Endothelin-1 receptor, found in Bos taurus (Bovine).